The following is a 303-amino-acid chain: Uridylate-specific endoribonuclease C (303 aa).

The N-terminal stretch at 1-16 is a signal peptide; it reads MVYLVFLCLLPSLISG. The EndoU domain occupies 32-303; sequence TDAEIQSLAE…KRFVASSYPI (272 aa). Active-site residues include histidine 181, histidine 196, and lysine 239. N-linked (GlcNAc...) asparagine glycosylation is present at asparagine 287.

The protein belongs to the ENDOU family. As to quaternary structure, monomer. Requires Mn(2+) as cofactor.

The protein resides in the secreted. The catalysed reaction is ribonucleotidyl-uridine-RNA = a 5'-end dephospho-uridine-RNA + a 3'-end 2',3'-cyclophospho-ribonucleotide-RNA. In terms of biological role, endoribonuclease that cleaves single-stranded RNAs at 5' of uridylates and releases a product with a 2',3'-cyclic phosphate at the 3'-end. This Xenopus laevis (African clawed frog) protein is Uridylate-specific endoribonuclease C (endou-c).